The sequence spans 230 residues: Early E1A protein (230 aa).

The interaction with RB1 in competition with E2F1 stretch occupies residues 40–48; that stretch reads PSLHDLFDL. The short motif at 106 to 110 is the LXCXE motif, interaction with host RB1 element; sequence LLCLE. Residues 145 to 163 fold into a zinc finger; the sequence is CLRCAYYQEQGENSICGLC. The interval 189-230 is disordered; that stretch reads KPGSRKRSAVTSRGSVESSKRPCLPEPEQTEPLDLSLKPRPQ. The PXDLS motif, CTBP-binding signature appears at 220–224; the sequence is PLDLS. A Nuclear localization signal motif is present at residues 226 to 230; that stretch reads KPRPQ.

This sequence belongs to the adenoviridae E1A protein family. As to quaternary structure, interacts with host UBE2I; this interaction interferes with polySUMOylation. Interacts with host RB1; this interaction induces the aberrant dissociation of RB1-E2F1 complex thereby disrupting the activity of RB1 and activating E2F1-regulated genes. Interacts with host ATF7; the interaction enhances ATF7-mediated viral transactivation activity which requires the zinc binding domains of both proteins. Isoform early E1A 32 kDa protein and isoform early E1A 26 kDa protein interact (via N-terminus) with CUL1 and E3 ubiquitin ligase RBX1; these interactions inhibit RBX1-CUL1-dependent elongation reaction of ubiquitin chains and attenuate ubiquitination of SCF(FBXW7) target proteins. Interacts (via PXLXP motif) with host ZMYND11/BS69 (via MYND-type zinc finger); this interaction inhibits E1A mediated transactivation. Interacts with host EP300; this interaction stimulates the acetylation of RB1 by recruiting EP300 and RB1 into a multimeric-protein complex. Interacts with host CTBP1 and CTBP2; this interaction seems to potentiate viral replication. Interacts with host DCAF7. Interacts with host DYRK1A. Interacts with host KPNA4; this interaction allows E1A import into the host nucleus. Interacts with host EP400; this interaction stabilizes MYC. Interacts with host TBP protein; this interaction probably disrupts the TBP-TATA complex.

It localises to the host nucleus. Its function is as follows. Plays a role in viral genome replication by driving entry of quiescent cells into the cell cycle. Stimulation of progression from G1 to S phase allows the virus to efficiently use the cellular DNA replicating machinery to achieve viral genome replication. E1A protein has both transforming and trans-activating activities. Induces the disassembly of the E2F1 transcription factor from RB1 by direct competition for the same binding site on RB1, with subsequent transcriptional activation of E2F1-regulated S-phase genes and of the E2 region of the adenoviral genome. Release of E2F1 leads to the ARF-mediated inhibition of MDM2 and causes TP53/p53 to accumulate because it is not targeted for degradation by MDM2-mediated ubiquitination anymore. This increase in TP53, in turn, would arrest the cell proliferation and direct its death but this effect is counteracted by the viral protein E1B-55K. Inactivation of the ability of RB1 to arrest the cell cycle is critical for cellular transformation, uncontrolled cellular growth and proliferation induced by viral infection. Interaction with RBX1 and CUL1 inhibits ubiquitination of the proteins targeted by SCF(FBXW7) ubiquitin ligase complex, and may be linked to unregulated host cell proliferation. The tumorigenesis-restraining activity of E1A may be related to the disruption of the host CtBP-CtIP complex through the CtBP binding motif. In Canine adenovirus serotype 1 (strain CLL) (CAdV-1), this protein is Early E1A protein.